A 488-amino-acid chain; its full sequence is Protein nucleotidyltransferase YdiU (488 aa).

The ATP site is built by glycine 90, glycine 92, arginine 93, lysine 113, aspartate 125, glycine 126, arginine 176, and arginine 183. Aspartate 252 (proton acceptor) is an active-site residue. The Mg(2+) site is built by asparagine 253 and aspartate 262. Aspartate 262 serves as a coordination point for ATP.

Belongs to the SELO family. It depends on Mg(2+) as a cofactor. Requires Mn(2+) as cofactor.

It catalyses the reaction L-seryl-[protein] + ATP = 3-O-(5'-adenylyl)-L-seryl-[protein] + diphosphate. It carries out the reaction L-threonyl-[protein] + ATP = 3-O-(5'-adenylyl)-L-threonyl-[protein] + diphosphate. The enzyme catalyses L-tyrosyl-[protein] + ATP = O-(5'-adenylyl)-L-tyrosyl-[protein] + diphosphate. The catalysed reaction is L-histidyl-[protein] + UTP = N(tele)-(5'-uridylyl)-L-histidyl-[protein] + diphosphate. It catalyses the reaction L-seryl-[protein] + UTP = O-(5'-uridylyl)-L-seryl-[protein] + diphosphate. It carries out the reaction L-tyrosyl-[protein] + UTP = O-(5'-uridylyl)-L-tyrosyl-[protein] + diphosphate. In terms of biological role, nucleotidyltransferase involved in the post-translational modification of proteins. It can catalyze the addition of adenosine monophosphate (AMP) or uridine monophosphate (UMP) to a protein, resulting in modifications known as AMPylation and UMPylation. The protein is Protein nucleotidyltransferase YdiU of Thiobacillus denitrificans (strain ATCC 25259 / T1).